The sequence spans 136 residues: Histone H3.2 (136 aa).

Positions 1-43 are disordered; the sequence is MARTKQTARKSTGGKAPRKQLATKAARKSAPATGGVKKPHRFR. The residue at position 5 (K5) is an N6-methylated lysine. K10 carries the N6-acetyllysine; alternate modification. Position 10 is an N6-methylated lysine; alternate (K10). S11 carries the post-translational modification Phosphoserine. Phosphothreonine is present on T12. N6-acetyllysine is present on K15. N6-acetyllysine; alternate is present on residues K19 and K24. N6-methylated lysine; alternate occurs at positions 19 and 24. K28 bears the N6-methylated lysine mark. A Phosphoserine modification is found at S29. K37 is subject to N6-methylated lysine.

It belongs to the histone H3 family. As to quaternary structure, the nucleosome is a histone octamer containing two molecules each of H2A, H2B, H3 and H4 assembled in one H3-H4 heterotetramer and two H2A-H2B heterodimers. The octamer wraps approximately 147 bp of DNA. In terms of processing, acetylation is generally linked to gene activation. Can be acetylated to form H3K9ac, H3K14ac, H3K18ac and H3K23ac. H3K9ac could compete with H3K9me and prevent gene silencing. H3K9ac is restricted to euchromatin. Post-translationally, methylated to form mainly H3K4me, H3K9me, H3K18me, H3K23me, H3K27me and H3K36me. H3K4me1/2/3, H3K9me3, H3K27me3 and H3K36me1/2/3 are typical marks for euchromatin, whereas heterochromatic chromocenters are enriched in H3K9me1/2 and H3K27me1/2. H2BK143ub1 is probably prerequisite for H3K4me. Can be phosphorylated to form H3S10ph, H3T11ph and H3S28ph. As to expression, expressed in bicellular pollen, root tips, shoot apices, young leaves and ovules.

The protein localises to the nucleus. It localises to the nucleolus. It is found in the chromosome. Core component of nucleosome. Nucleosomes wrap and compact DNA into chromatin, limiting DNA accessibility to the cellular machineries which require DNA as a template. Histones thereby play a central role in transcription regulation, DNA repair, DNA replication and chromosomal stability. DNA accessibility is regulated via a complex set of post-translational modifications of histones, also called histone code, and nucleosome remodeling. The protein is Histone H3.2 (YAH3) of Lilium longiflorum (Trumpet lily).